The following is a 1060-amino-acid chain: DNA-directed RNA polymerase subunit beta (1060 aa).

The protein belongs to the RNA polymerase beta chain family. In terms of assembly, in plastids the minimal PEP RNA polymerase catalytic core is composed of four subunits: alpha, beta, beta', and beta''. When a (nuclear-encoded) sigma factor is associated with the core the holoenzyme is formed, which can initiate transcription.

Its subcellular location is the plastid. It localises to the chloroplast. The enzyme catalyses RNA(n) + a ribonucleoside 5'-triphosphate = RNA(n+1) + diphosphate. Its function is as follows. DNA-dependent RNA polymerase catalyzes the transcription of DNA into RNA using the four ribonucleoside triphosphates as substrates. The sequence is that of DNA-directed RNA polymerase subunit beta from Lactuca sativa (Garden lettuce).